The primary structure comprises 152 residues: Histone deacetylase complex subunit SAP18 (152 aa).

Residues 1–38 (MAEAARRQGGGRPLPPPPRGVNQQPPRPKPEPVDREKT) are disordered. Residues 28–38 (PKPEPVDREKT) show a composition bias toward basic and acidic residues.

This sequence belongs to the SAP18 family. As to quaternary structure, interacts with SIN3, ERF3, ERF4 and HDA19. Ubiquitous, with low level in flowers.

In terms of biological role, links the histone deacetylase complex to transcriptional repressors bound to chromatin. Involved in the tethering of the SIN3 complex to core histone proteins. The protein is Histone deacetylase complex subunit SAP18 of Arabidopsis thaliana (Mouse-ear cress).